The primary structure comprises 1233 residues: MTSNRKNENEIINALSIPTVSNPSTQMNLSPDARIEDSLCVAEVNNIDPFVSASTVQTGINIAGRILGVLGVPFAGQLASFYSFLVGELWPSGRDPWEIFLEHVEQLIRQQVTENTRNTAIARLEGLGRGYRSYQQALETWLDNRNDARSRSIILERYVALELDITTAIPLFRIRNEEVPLLMVYAQAANLHLLLLRDASLFGSEWGMASSDVNQYYQEQIRYTEEYSNHCVQWYNTGLNNLRGTNAESWLRYNQFRRDLTLGVLDLVALFPSYDTRTYPINTSAQLTREIYTDPIGRTNAPSGFASTNWFNNNAPSFSAIEAAIFRPPHLLDFPEQLTIYSASSRWSSTQHMNYWVGHRLNFRPIGGTLNTSTQGLTNNTSINPVTLQFTSRDVYRTESNAGTNILFTTPVNGVPWARFNFINPQNIYERGATTYSQPYQGVGIQLFDSETELPPETTERPNYESYSHRLSHIGLIIGNTLRAPVYSWTHRSADRTNTIGPNRITQIPLVKALNLHSGVTVVGGPGFTGGDILRRTNTGTFGDIRLNINVPLSQRYRVRIRYASTTDLQFFTRINGTTVNIGNFSRTMNRGDNLEYRSFRTAGFSTPFNFLNAQSTFTLGAQSFSNQEVYIDRVEFVPAEVTFEAEYDLERAQKAVNALFTSTNPRRLKTDVTDYHIDQVSNMVACLSDEFCLDEKRELFEKVKYAKRLSDERNLLQDPNFTFISGQLSFASIDGQSNFPSINELSEHGWWGSANVTIQEGNDVFKENYVTLPGTFNECYPNYLYQKIGESELKAYTRYQLRGYIENSQDLEIYLIRYNAKHEAINVPGTESIWSISAESTIGKCTEPNRCAPHYEWNPDLDCSCRDGEKCAHHSHHSTLDIDVGCTDLHENLGVWLIFKIKTQDGHARLGNLEYLEEKPLLGEALRRVKRTEKKWRDKREKLHLETKRVYTEAKESVDALFVDSQYDRLQANSNIGMIHAADKLVHSIREAYLSELPVIRGVNADIFEELEGHILTAFSLYDARNAVKNGDFNNGLTCWNVKGHVDVQQSHHRFDLVVPEWKAEVSQAVRVCPGCGYILRVTAYKEGYGEGCVTIHEIEENTDELNFKNRVEEEIYPPDTGTCKYYTENQGTRTCGNECGSRNEGYDNAYEINAKSSLEYRPTYEEETYTDVRRENHCEYARGYINYSPVPAGYVTKELEYFPETDTVWIEIGETEGKFIVDSVELLLMEE.

The protein belongs to the delta endotoxin family.

Promotes colloidosmotic lysis by binding to the midgut epithelial cells of insects. This Bacillus thuringiensis subsp. morrisoni protein is Pesticidal crystal protein Cry1Bc (cry1Bc).